Consider the following 119-residue polypeptide: Large ribosomal subunit protein bL20c (119 aa).

Belongs to the bacterial ribosomal protein bL20 family.

The protein resides in the plastid. The protein localises to the chloroplast. In terms of biological role, binds directly to 23S ribosomal RNA and is necessary for the in vitro assembly process of the 50S ribosomal subunit. It is not involved in the protein synthesizing functions of that subunit. This chain is Large ribosomal subunit protein bL20c, found in Nandina domestica (Heavenly bamboo).